Consider the following 21-residue polypeptide: Protein YmjD (21 aa).

This chain is Protein YmjD (ymjD), found in Escherichia coli (strain K12).